We begin with the raw amino-acid sequence, 183 residues long: Inner membrane-spanning protein YciB (183 aa).

Transmembrane regions (helical) follow at residues 22–44, 54–74, 76–96, 119–139, and 149–169; these read IYTA…WVRY, TFLL…DAFI, WKVT…RYGF, VNLA…YVAF, and FKVF…GVYL.

The protein belongs to the YciB family.

It is found in the cell inner membrane. In terms of biological role, plays a role in cell envelope biogenesis, maintenance of cell envelope integrity and membrane homeostasis. The polypeptide is Inner membrane-spanning protein YciB (Aeromonas salmonicida (strain A449)).